The chain runs to 518 residues: Crotonobetaine/carnitine--CoA ligase (518 aa).

Belongs to the ATP-dependent AMP-binding enzyme family.

It carries out the reaction 4-(trimethylamino)butanoate + ATP + CoA = 4-(trimethylamino)butanoyl-CoA + AMP + diphosphate. The enzyme catalyses crotonobetaine + ATP + CoA = crotonobetainyl-CoA + AMP + diphosphate. It catalyses the reaction (R)-carnitine + ATP + CoA = (R)-carnitinyl-CoA + AMP + diphosphate. The protein operates within amine and polyamine metabolism; carnitine metabolism. In terms of biological role, catalyzes the transfer of CoA to carnitine, generating the initial carnitinyl-CoA needed for the CaiB reaction cycle. Also has activity toward crotonobetaine and gamma-butyrobetaine. The polypeptide is Crotonobetaine/carnitine--CoA ligase (Proteus sp. (strain LE138)).